A 101-amino-acid chain; its full sequence is Small ribosomal subunit protein uS10 (101 aa).

Belongs to the universal ribosomal protein uS10 family. In terms of assembly, part of the 30S ribosomal subunit.

Its function is as follows. Involved in the binding of tRNA to the ribosomes. This chain is Small ribosomal subunit protein uS10, found in Corynebacterium urealyticum (strain ATCC 43042 / DSM 7109).